We begin with the raw amino-acid sequence, 529 residues long: Peptide chain release factor 3 (529 aa).

The tr-type G domain maps to 11–280 (NKRRTFAIIS…GLVKWAPAPM (270 aa)). GTP-binding positions include 20 to 27 (SHPDAGKT), 88 to 92 (DTPGH), and 142 to 145 (NKLD).

Belongs to the TRAFAC class translation factor GTPase superfamily. Classic translation factor GTPase family. PrfC subfamily.

It is found in the cytoplasm. Increases the formation of ribosomal termination complexes and stimulates activities of RF-1 and RF-2. It binds guanine nucleotides and has strong preference for UGA stop codons. It may interact directly with the ribosome. The stimulation of RF-1 and RF-2 is significantly reduced by GTP and GDP, but not by GMP. The chain is Peptide chain release factor 3 from Proteus mirabilis (strain HI4320).